A 402-amino-acid polypeptide reads, in one-letter code: Imidazolonepropionase (402 aa).

Fe(3+)-binding residues include H66 and H68. Residues H66 and H68 each coordinate Zn(2+). The 4-imidazolone-5-propanoate site is built by R75, Y138, and H171. Y138 is a binding site for N-formimidoyl-L-glutamate. H236 contacts Fe(3+). H236 contacts Zn(2+). Position 239 (Q239) interacts with 4-imidazolone-5-propanoate. D311 is a binding site for Fe(3+). D311 contacts Zn(2+). N313 and G315 together coordinate N-formimidoyl-L-glutamate. T316 contacts 4-imidazolone-5-propanoate.

Belongs to the metallo-dependent hydrolases superfamily. HutI family. It depends on Zn(2+) as a cofactor. Requires Fe(3+) as cofactor.

The protein localises to the cytoplasm. It carries out the reaction 4-imidazolone-5-propanoate + H2O = N-formimidoyl-L-glutamate. It participates in amino-acid degradation; L-histidine degradation into L-glutamate; N-formimidoyl-L-glutamate from L-histidine: step 3/3. Catalyzes the hydrolytic cleavage of the carbon-nitrogen bond in imidazolone-5-propanoate to yield N-formimidoyl-L-glutamate. It is the third step in the universal histidine degradation pathway. The protein is Imidazolonepropionase of Pseudomonas aeruginosa (strain LESB58).